The sequence spans 1865 residues: Transcription initiation factor TFIID subunit 1 (1865 aa).

A disordered region spans residues Met-1–Gly-27. One can recognise a Protein kinase 1 domain in the interval Met-1–Ile-409. At Ser-131 the chain carries Phosphoserine; by autocatalysis. The disordered stretch occupies residues Glu-144–Asp-199. Residues Met-151–Pro-160 show a composition bias toward pro residues. Positions Val-161–Asp-176 are enriched in basic and acidic residues. The residue at position 302 (Ser-302) is a Phosphoserine; by autocatalysis. The tract at residues Pro-509–Leu-530 is disordered. The histone acetyltransferase (HAT) stretch occupies residues Lys-512 to Lys-971. An N6-acetyllysine modification is found at Lys-539. Glycyl lysine isopeptide (Lys-Gly) (interchain with G-Cter in SUMO2) cross-links involve residues Lys-544 and Lys-557. 2 disordered regions span residues Pro-964–Val-983 and Arg-1228–Arg-1252. Composition is skewed to basic and acidic residues over residues Gln-969–Pro-978 and Arg-1228–Lys-1244. The segment at residues Val-1190 to Met-1268 is a DNA-binding region (HMG box). The segment at Val-1337 to Ala-1624 is interaction with ASF1A and ASF1B. The Nuclear localization signal signature appears at Pro-1346 to Val-1353. 2 Bromo domains span residues Arg-1371–Lys-1479 and Leu-1493–Tyr-1602. The Protein kinase 2 domain maps to Met-1420–Glu-1865. Residues Glu-1625–Glu-1865 are disordered. Positions Thr-1633–Pro-1642 are enriched in pro residues. Over residues Asp-1646–Gln-1682 the composition is skewed to polar residues. Ser-1664 and Ser-1667 each carry phosphoserine. Composition is skewed to acidic residues over residues Glu-1683–Gly-1697 and Glu-1715–Asp-1730. The segment covering Ser-1739–Ser-1751 has biased composition (low complexity). A phosphoserine mark is found at Ser-1773, Ser-1776, and Ser-1794. The segment covering Lys-1804 to Ser-1814 has biased composition (polar residues). The span at Val-1820–Glu-1829 shows a compositional bias: acidic residues. Phosphoserine is present on Ser-1821. Over residues Ser-1832–His-1841 the composition is skewed to polar residues.

Belongs to the TAF1 family. Component of the TFIID basal transcription factor complex, composed of TATA-box-binding protein TBP, and a number of TBP-associated factors (TAFs), including TAF1, TAF2, TAF3, TAF4, TAF5, TAF6, TAF7, TAF8, TAF9, TAF10, TAF11, TAF12 and TAF13. Interacts with TAF7; the interaction is direct. TAF1, when part of the TFIID complex, interacts with C-terminus of TP53. Part of a TFIID-containing RNA polymerase II pre-initiation complex that is composed of TBP and at least GTF2A1, GTF2A2, GTF2E1, GTF2E2, GTF2F1, GTF2H2, GTF2H3, GTF2H4, GTF2H5, GTF2B, TCEA1, ERCC2, ERCC3, TAF1, TAF2, TAF3, TAF4, TAF5, TAF6, TAF7, TAF8, TAF9, TAF10, TAF11, TAF12 and TAF13. Component of some MLL1/MLL complex, at least composed of the core components KMT2A/MLL1, ASH2L, HCFC1/HCF1, WDR5 and RBBP5, as well as the facultative components BACC1, CHD8, E2F6, HSP70, INO80C, KANSL1, LAS1L, MAX, MCRS1, MGA, KAT8/MOF, PELP1, PHF20, PRP31, RING2, RUVB1/TIP49A, RUVB2/TIP49B, SENP3, TAF1, TAF4, TAF6, TAF7, TAF9 and TEX10. RB1 interacts with the N-terminal domain of TAF1. Interacts with ASF1A and ASF1B. Interacts (via bromo domains) with acetylated lysine residues on the N-terminus of histone H1.4, H2A, H2B, H3 and H4 (in vitro). The cofactor is Mg(2+). Post-translationally, phosphorylated by casein kinase II in vitro.

The protein localises to the nucleus. The enzyme catalyses L-seryl-[protein] + ATP = O-phospho-L-seryl-[protein] + ADP + H(+). The catalysed reaction is L-threonyl-[protein] + ATP = O-phospho-L-threonyl-[protein] + ADP + H(+). It carries out the reaction L-lysyl-[protein] + acetyl-CoA = N(6)-acetyl-L-lysyl-[protein] + CoA + H(+). Its activity is regulated as follows. Autophosphorylates on Ser residues. Inhibited by retinoblastoma tumor suppressor protein, RB1. Binding to TAF1 or CIITA inhibits the histone acetyltransferase activity. Functionally, the TFIID basal transcription factor complex plays a major role in the initiation of RNA polymerase II (Pol II)-dependent transcription. TFIID recognizes and binds promoters with or without a TATA box via its subunit TBP, a TATA-box-binding protein, and promotes assembly of the pre-initiation complex (PIC). The TFIID complex consists of TBP and TBP-associated factors (TAFs), including TAF1, TAF2, TAF3, TAF4, TAF5, TAF6, TAF7, TAF8, TAF9, TAF10, TAF11, TAF12 and TAF13. TAF1 is the largest component and core scaffold of the TFIID complex, involved in nucleating complex assembly. TAF1 forms a promoter DNA binding subcomplex of TFIID, together with TAF7 and TAF2. Contains novel N- and C-terminal Ser/Thr kinase domains which can autophosphorylate or transphosphorylate other transcription factors. Phosphorylates TP53 on 'Thr-55' which leads to MDM2-mediated degradation of TP53. Phosphorylates GTF2A1 and GTF2F1 on Ser residues. Possesses DNA-binding activity. Essential for progression of the G1 phase of the cell cycle. The polypeptide is Transcription initiation factor TFIID subunit 1 (Mesocricetus auratus (Golden hamster)).